The following is a 251-amino-acid chain: Small ribosomal subunit protein uS2 (251 aa).

This sequence belongs to the universal ribosomal protein uS2 family.

This Nitrosomonas eutropha (strain DSM 101675 / C91 / Nm57) protein is Small ribosomal subunit protein uS2.